A 1085-amino-acid chain; its full sequence is Carbamoyl phosphate synthase large chain (1085 aa).

The carboxyphosphate synthetic domain stretch occupies residues 1–399 (MPKRTDISNI…ALQKALCSLE (399 aa)). ATP contacts are provided by Arg-127, Arg-167, Gly-174, Glu-206, Leu-208, Glu-213, Gly-239, Val-240, His-241, Gln-283, and Glu-297. In terms of domain architecture, ATP-grasp 1 spans 131–326 (KEAMLKIGMD…IAKVATMLAV (196 aa)). 3 residues coordinate Mg(2+): Gln-283, Glu-297, and Asn-299. 3 residues coordinate Mn(2+): Gln-283, Glu-297, and Asn-299. Positions 400 to 551 (NNWLGFESLS…YAPNPLPPIG (152 aa)) are oligomerization domain. The interval 552–951 (NKQEKQEKKI…AFFKAQTACF (400 aa)) is carbamoyl phosphate synthetic domain. The ATP-grasp 2 domain maps to 678–871 (SLFLKELDIK…LAKVATRVMV (194 aa)). ATP-binding residues include Arg-714, Lys-756, Leu-758, Glu-763, Gly-788, Ile-789, His-790, Ser-791, Gln-830, and Glu-842. 3 residues coordinate Mg(2+): Gln-830, Glu-842, and Asn-844. Mn(2+) is bound by residues Gln-830, Glu-842, and Asn-844. Positions 952-1085 (NPIKNKGLIF…ELLALQDYLK (134 aa)) constitute an MGS-like domain. The segment at 952 to 1085 (NPIKNKGLIF…ELLALQDYLK (134 aa)) is allosteric domain.

This sequence belongs to the CarB family. In terms of assembly, composed of two chains; the small (or glutamine) chain promotes the hydrolysis of glutamine to ammonia, which is used by the large (or ammonia) chain to synthesize carbamoyl phosphate. Tetramer of heterodimers (alpha,beta)4. Requires Mg(2+) as cofactor. Mn(2+) serves as cofactor.

It catalyses the reaction hydrogencarbonate + L-glutamine + 2 ATP + H2O = carbamoyl phosphate + L-glutamate + 2 ADP + phosphate + 2 H(+). The catalysed reaction is hydrogencarbonate + NH4(+) + 2 ATP = carbamoyl phosphate + 2 ADP + phosphate + 2 H(+). The protein operates within amino-acid biosynthesis; L-arginine biosynthesis; carbamoyl phosphate from bicarbonate: step 1/1. It functions in the pathway pyrimidine metabolism; UMP biosynthesis via de novo pathway; (S)-dihydroorotate from bicarbonate: step 1/3. Its function is as follows. Large subunit of the glutamine-dependent carbamoyl phosphate synthetase (CPSase). CPSase catalyzes the formation of carbamoyl phosphate from the ammonia moiety of glutamine, carbonate, and phosphate donated by ATP, constituting the first step of 2 biosynthetic pathways, one leading to arginine and/or urea and the other to pyrimidine nucleotides. The large subunit (synthetase) binds the substrates ammonia (free or transferred from glutamine from the small subunit), hydrogencarbonate and ATP and carries out an ATP-coupled ligase reaction, activating hydrogencarbonate by forming carboxy phosphate which reacts with ammonia to form carbamoyl phosphate. The sequence is that of Carbamoyl phosphate synthase large chain from Helicobacter pylori (strain J99 / ATCC 700824) (Campylobacter pylori J99).